Reading from the N-terminus, the 205-residue chain is Nascent polypeptide-associated complex subunit alpha-like protein (205 aa).

2 disordered regions span residues 1 to 73 (MPSV…RKAM) and 137 to 166 (KAPNLSHVTMKPESSTAAQEDEDEVDDTGV). Basic and acidic residues predominate over residues 20-29 (EQQELEHSDE). Acidic residues predominate over residues 30-51 (PILEDDEDDDDEEDDNDEDDAQ). A compositionally biased stretch (basic and acidic residues) spans 56–66 (GEGKSKQSRSE). The NAC-A/B domain maps to 63–128 (SRSEKKCRKA…AKIEDLSSQL (66 aa)). The segment covering 155–165 (QEDEDEVDDTG) has biased composition (acidic residues). The 38-residue stretch at 166-203 (VEPKDIELVMTQAGVSRTKAVKALKAADGDIVSAIMDL) folds into the UBA domain.

The protein belongs to the NAC-alpha family.

May promote appropriate targeting of ribosome-nascent polypeptide complexes. The protein is Nascent polypeptide-associated complex subunit alpha-like protein of Pinus taeda (Loblolly pine).